Reading from the N-terminus, the 825-residue chain is Penicillin-binding protein 1A (825 aa).

Topologically, residues Met-1–Arg-6 are cytoplasmic. The helical; Signal-anchor for type II membrane protein transmembrane segment at Leu-7 to Phe-27 threads the bilayer. The Periplasmic portion of the chain corresponds to Tyr-28–Phe-825. The segment at Met-48–Glu-216 is transglycosylase. Catalysis depends on Glu-86, which acts as the Proton donor; for transglycosylase activity. The transpeptidase stretch occupies residues Pro-413–Glu-752. The Acyl-ester intermediate; for transpeptidase activity role is filled by Ser-471.

In the N-terminal section; belongs to the glycosyltransferase 51 family. It in the C-terminal section; belongs to the transpeptidase family.

The protein localises to the cell inner membrane. The enzyme catalyses [GlcNAc-(1-&gt;4)-Mur2Ac(oyl-L-Ala-gamma-D-Glu-L-Lys-D-Ala-D-Ala)](n)-di-trans,octa-cis-undecaprenyl diphosphate + beta-D-GlcNAc-(1-&gt;4)-Mur2Ac(oyl-L-Ala-gamma-D-Glu-L-Lys-D-Ala-D-Ala)-di-trans,octa-cis-undecaprenyl diphosphate = [GlcNAc-(1-&gt;4)-Mur2Ac(oyl-L-Ala-gamma-D-Glu-L-Lys-D-Ala-D-Ala)](n+1)-di-trans,octa-cis-undecaprenyl diphosphate + di-trans,octa-cis-undecaprenyl diphosphate + H(+). It carries out the reaction Preferential cleavage: (Ac)2-L-Lys-D-Ala-|-D-Ala. Also transpeptidation of peptidyl-alanyl moieties that are N-acyl substituents of D-alanine.. It functions in the pathway cell wall biogenesis; peptidoglycan biosynthesis. Functionally, cell wall formation. Synthesis of cross-linked peptidoglycan from the lipid intermediates. The enzyme has a penicillin-insensitive transglycosylase N-terminal domain (formation of linear glycan strands) and a penicillin-sensitive transpeptidase C-terminal domain (cross-linking of the peptide subunits). This is Penicillin-binding protein 1A (mrcA) from Vibrio cholerae serotype O1 (strain ATCC 39315 / El Tor Inaba N16961).